Here is a 360-residue protein sequence, read N- to C-terminus: NAD(P)H-quinone oxidoreductase subunit 1, chloroplastic (360 aa).

8 consecutive transmembrane segments (helical) span residues 27–47, 98–118, 129–149, 165–185, 203–223, 253–273, 297–317, and 340–360; these read IWIF…VLVI, FSIG…VIPF, IGIF…LMSG, AAQS…ISLL, FWGW…ISSL, FGLF…FVTV, IFGT…FLFV, and FLLP…LFSL.

This sequence belongs to the complex I subunit 1 family. As to quaternary structure, NDH is composed of at least 16 different subunits, 5 of which are encoded in the nucleus.

The protein resides in the plastid. Its subcellular location is the chloroplast thylakoid membrane. It carries out the reaction a plastoquinone + NADH + (n+1) H(+)(in) = a plastoquinol + NAD(+) + n H(+)(out). It catalyses the reaction a plastoquinone + NADPH + (n+1) H(+)(in) = a plastoquinol + NADP(+) + n H(+)(out). Functionally, NDH shuttles electrons from NAD(P)H:plastoquinone, via FMN and iron-sulfur (Fe-S) centers, to quinones in the photosynthetic chain and possibly in a chloroplast respiratory chain. The immediate electron acceptor for the enzyme in this species is believed to be plastoquinone. Couples the redox reaction to proton translocation, and thus conserves the redox energy in a proton gradient. The chain is NAD(P)H-quinone oxidoreductase subunit 1, chloroplastic from Arabidopsis thaliana (Mouse-ear cress).